A 503-amino-acid chain; its full sequence is AMP phosphorylase (503 aa).

Residues Gly-168, 194-199 (SRAITS), and Thr-203 each bind AMP. Asp-256 acts as the Proton donor in catalysis. Positions 264 and 288 each coordinate AMP.

It belongs to the thymidine/pyrimidine-nucleoside phosphorylase family. Type 2 subfamily.

The catalysed reaction is AMP + phosphate = alpha-D-ribose 1,5-bisphosphate + adenine. It catalyses the reaction CMP + phosphate = cytosine + alpha-D-ribose 1,5-bisphosphate. The enzyme catalyses UMP + phosphate = alpha-D-ribose 1,5-bisphosphate + uracil. Functionally, catalyzes the conversion of AMP and phosphate to adenine and ribose 1,5-bisphosphate (R15P). Exhibits phosphorylase activity toward CMP and UMP in addition to AMP. Functions in an archaeal AMP degradation pathway, together with R15P isomerase and RubisCO. The polypeptide is AMP phosphorylase (Thermococcus sibiricus (strain DSM 12597 / MM 739)).